Here is a 377-residue protein sequence, read N- to C-terminus: Probable isocitrate dehydrogenase [NAD] subunit alpha, mitochondrial (377 aa).

Substrate contacts are provided by Arg-131, Arg-141, Arg-162, and Asp-249. Mg(2+) contacts are provided by Asp-249, Asp-273, and Asp-277.

The protein belongs to the isocitrate and isopropylmalate dehydrogenases family. Heterooligomer of subunits alpha, beta, and gamma in the apparent ratio of 2:1:1. Mg(2+) serves as cofactor. The cofactor is Mn(2+).

It is found in the mitochondrion. It catalyses the reaction D-threo-isocitrate + NAD(+) = 2-oxoglutarate + CO2 + NADH. Probable catalytic subunit of the enzyme which catalyzes the decarboxylation of isocitrate (ICT) into alpha-ketoglutarate. The polypeptide is Probable isocitrate dehydrogenase [NAD] subunit alpha, mitochondrial (Drosophila melanogaster (Fruit fly)).